The primary structure comprises 302 residues: uncharacterized protein (302 aa).

The HTH lysR-type domain occupies 1–60; it reads MRMNMSDFATFFAVARNQSFRAAGDELGLSSSAISHSIKTLEQRLKIRLFNRTTRSVSLT. A DNA-binding region (H-T-H motif) is located at residues 20 to 40; the sequence is FRAAGDELGLSSSAISHSIKT.

Belongs to the LysR transcriptional regulatory family.

This is an uncharacterized protein from Escherichia coli (strain K12).